The sequence spans 168 residues: Peptide deformylase 2 (168 aa).

2 residues coordinate Fe cation: Cys-91 and His-133. The active site involves Glu-134. A Fe cation-binding site is contributed by His-137.

Belongs to the polypeptide deformylase family. Fe(2+) is required as a cofactor.

It catalyses the reaction N-terminal N-formyl-L-methionyl-[peptide] + H2O = N-terminal L-methionyl-[peptide] + formate. Removes the formyl group from the N-terminal Met of newly synthesized proteins. Requires at least a dipeptide for an efficient rate of reaction. N-terminal L-methionine is a prerequisite for activity but the enzyme has broad specificity at other positions. In Vibrio cholerae serotype O1 (strain ATCC 39315 / El Tor Inaba N16961), this protein is Peptide deformylase 2.